We begin with the raw amino-acid sequence, 59 residues long: Light-harvesting protein B-800-850 alpha chain E (59 aa).

Residues Met-1–Lys-11 lie on the Cytoplasmic side of the membrane. The helical transmembrane segment at Pro-12 to Leu-35 threads the bilayer. His-31 provides a ligand contact to a bacteriochlorophyll. Residues Ser-36 to Gly-59 are Periplasmic-facing.

This sequence belongs to the antenna complex alpha subunit family. The core complex is formed by different alpha and beta chains, binding bacteriochlorophyll molecules, and arranged most probably in tetrameric structures disposed around the reaction center. The non-pigmented gamma chains may constitute additional components.

The protein resides in the cell inner membrane. Antenna complexes are light-harvesting systems, which transfer the excitation energy to the reaction centers. The sequence is that of Light-harvesting protein B-800-850 alpha chain E (pucAE) from Rhodopseudomonas palustris (strain ATCC BAA-98 / CGA009).